The primary structure comprises 431 residues: Adenylosuccinate synthetase (431 aa).

Residues 13–19 and 41–43 contribute to the GTP site; these read GDEGKGK and GHT. The Proton acceptor role is filled by Asp-14. Positions 14 and 41 each coordinate Mg(2+). Residues 14–17, 39–42, Thr-130, Arg-144, Gln-225, Thr-240, and Arg-304 each bind IMP; these read DEGK and NAGH. Catalysis depends on His-42, which acts as the Proton donor. Residue 300 to 306 coordinates substrate; that stretch reads SVTGRPR. GTP is bound by residues Arg-306, 332–334, and 414–416; these read KLD and STG.

It belongs to the adenylosuccinate synthetase family. Homodimer. It depends on Mg(2+) as a cofactor.

The protein resides in the cytoplasm. The enzyme catalyses IMP + L-aspartate + GTP = N(6)-(1,2-dicarboxyethyl)-AMP + GDP + phosphate + 2 H(+). Its pathway is purine metabolism; AMP biosynthesis via de novo pathway; AMP from IMP: step 1/2. Its function is as follows. Plays an important role in the de novo pathway of purine nucleotide biosynthesis. Catalyzes the first committed step in the biosynthesis of AMP from IMP. This is Adenylosuccinate synthetase from Bordetella petrii (strain ATCC BAA-461 / DSM 12804 / CCUG 43448).